The following is a 637-amino-acid chain: Nuclear receptor subfamily 2 group C member 1-A (637 aa).

Residues 149–224 (VELCVVCGDK…LGMKQDSVQC (76 aa)) constitute a DNA-binding region (nuclear receptor). NR C4-type zinc fingers lie at residues 152–172 (CVVC…CEGC) and 188–207 (CRGS…CQYC). One can recognise an NR LBD domain in the interval 383–624 (CLGSNANLLH…SIIPYILRME (242 aa)).

Belongs to the nuclear hormone receptor family. NR2 subfamily.

It localises to the nucleus. Its function is as follows. Orphan nuclear receptor. Binds the IR7 element in the promoter of its own gene in an autoregulatory negative feedback mechanism. Primarily repressor of a broad range of genes. Binds to hormone response elements (HREs) consisting of two 5'-AGGTCA-3' half site direct repeat consensus sequences. This is Nuclear receptor subfamily 2 group C member 1-A (nr2c1-a) from Xenopus laevis (African clawed frog).